Here is a 478-residue protein sequence, read N- to C-terminus: uncharacterized protein (478 aa).

One can recognise an RRM domain in the interval 5 to 85; sequence KRIYVGGLSS…SKLRIEEARP (81 aa). Residues Ser207 and Ser308 each carry the phosphoserine modification.

Its subcellular location is the nucleus. It localises to the nucleolus. This is an uncharacterized protein from Schizosaccharomyces pombe (strain 972 / ATCC 24843) (Fission yeast).